A 1008-amino-acid polypeptide reads, in one-letter code: SKI family transcriptional corepressor 2 (1008 aa).

2 disordered regions span residues 280-315 (HLLG…DDDD) and 514-927 (EPGG…KKDV). 2 stretches are compositionally biased toward pro residues: residues 284–294 (APPPPPPPPPL) and 525–534 (APPPGQPPPV). Low complexity-rich tracts occupy residues 535–544 (VANGPGSGPP) and 578–595 (GVTS…SVGT). The segment covering 626–635 (GGKDDAESLA) has biased composition (basic and acidic residues). Basic residues predominate over residues 649-666 (PAHHHHHHHHPHHHHHHP). Residues 691 to 703 (APPPPPPPPPLAP) are compositionally biased toward pro residues. Acidic residues-rich tracts occupy residues 724-739 (DSSE…QEVD) and 748-766 (GEEE…EDEE). Positions 787–797 (LSEKGSGRDRT) are enriched in basic and acidic residues. A compositionally biased stretch (low complexity) spans 842 to 855 (SSSGGSRPGSPVHH). Basic and acidic residues-rich tracts occupy residues 856–872 (PSLE…KPKE), 880–890 (TKDDNFSDKNK), and 905–915 (FWRERSGEHTQ).

This sequence belongs to the SKI family. In terms of assembly, interacts with SMAD2 and SMAD3. Expression is restricted to adult and embryonic central nervous system. Expressed at high levels in the developing cerebellum, ventral metencephalon and myelencephalon at 12.5 dpc (at protein level). In the adult cerebellum, expressed specifically in Purkinje cells.

The protein localises to the nucleus. The protein resides in the cytoplasm. Acts as a TGF-beta antagonist in the nervous system. Exhibits transcriptional repressor activity. This Mus musculus (Mouse) protein is SKI family transcriptional corepressor 2.